Reading from the N-terminus, the 312-residue chain is Olfactory receptor 6Z7 (312 aa).

Topologically, residues 1–29 (MERSLALANMTRVQQFILLGLSTRLDIRD) are extracellular. Residue Asn-9 is glycosylated (N-linked (GlcNAc...) asparagine). The chain crosses the membrane as a helical span at residues 30–50 (ALFAVFLTLYLLTLLENTLII). The Cytoplasmic segment spans residues 51-69 (YLICSHKELHKPMYFFLGN). A helical membrane pass occupies residues 70–90 (LSCLEMCYVSVTMPTLLMGLW). Residue Asn-91 is a topological domain, extracellular. A helical transmembrane segment spans residues 92 to 112 (GLYHIPFIACMTQLFFFIVLV). A disulfide bond links Cys-101 and Cys-193. At 113-141 (GTECILLASMAYDRYVAICRPLHYPVLMR) the chain is on the cytoplasmic side. Residues 142–162 (PQVCLGLAMISWLGGLLVSMI) traverse the membrane as a helical segment. Residues 163 to 195 (KTTCIATLSYCGPNVLNHFFCDVSPLLNLSCTH) lie on the Extracellular side of the membrane. Asn-190 carries N-linked (GlcNAc...) asparagine glycosylation. Residues 196 to 216 (VALTELVDFISAIVILWGCFL) traverse the membrane as a helical segment. The Cytoplasmic portion of the chain corresponds to 217-241 (TTMASYVAIGRAVLRMPSTTARYKA). A helical membrane pass occupies residues 242-262 (FSTCASHLVVVGIFYSVTIFI). At 263–275 (YARPKRIEAMDLN) the chain is on the extracellular side. The chain crosses the membrane as a helical span at residues 276–296 (KVLSVIYTVVTPMCNPVIYCL). The Cytoplasmic portion of the chain corresponds to 297–312 (RNKEVQVALHRTMHWS).

This sequence belongs to the G-protein coupled receptor 1 family.

Its subcellular location is the cell membrane. Odorant receptor. This Mus musculus (Mouse) protein is Olfactory receptor 6Z7.